The following is a 393-amino-acid chain: tRNA(Met) cytidine acetate ligase (393 aa).

Residues Gly81, Asn142, and Arg167 each contribute to the ATP site.

Belongs to the TmcAL family.

The protein localises to the cytoplasm. It catalyses the reaction cytidine(34) in elongator tRNA(Met) + acetate + ATP = N(4)-acetylcytidine(34) in elongator tRNA(Met) + AMP + diphosphate. Catalyzes the formation of N(4)-acetylcytidine (ac(4)C) at the wobble position of elongator tRNA(Met), using acetate and ATP as substrates. First activates an acetate ion to form acetyladenylate (Ac-AMP) and then transfers the acetyl group to tRNA to form ac(4)C34. The chain is tRNA(Met) cytidine acetate ligase from Bacillus mycoides (strain KBAB4) (Bacillus weihenstephanensis).